The following is a 440-amino-acid chain: C4-dicarboxylate transport protein (440 aa).

Transmembrane regions (helical) follow at residues 7–29, 49–66, 79–101, 143–165, 186–208, 221–243, 291–313, 328–350, and 355–377; these read LYKS…GHYY, MVIA…IAGM, ALLY…VNVV, VVGA…FGFA, VMFN…AMAF, LGYL…LGGI, VVGL…YLTM, ITHQ…GVTG, and VLAA…ILGI. Positions 419–440 are disordered; sequence GGAPLIDTRPTDDLGVAEGPAR.

Belongs to the dicarboxylate/amino acid:cation symporter (DAACS) (TC 2.A.23) family.

The protein resides in the cell inner membrane. Its function is as follows. Responsible for the transport of dicarboxylates such as succinate, fumarate, and malate from the periplasm across the membrane. In Pseudomonas putida (strain ATCC 47054 / DSM 6125 / CFBP 8728 / NCIMB 11950 / KT2440), this protein is C4-dicarboxylate transport protein.